The sequence spans 218 residues: Ras-related protein Rab11D (218 aa).

Residue 20 to 27 coordinates GTP; the sequence is GDSGVGKS. Residues 42–50 carry the Effector region motif; sequence SKSTIGVEF. GTP contacts are provided by residues 68–72 and 126–129; these read DTAGQ and NKSD. S-geranylgeranyl cysteine attachment occurs at residues Cys215 and Cys216.

It belongs to the small GTPase superfamily. Rab family.

The protein localises to the cell membrane. The sequence is that of Ras-related protein Rab11D (RAB11D) from Lotus japonicus (Lotus corniculatus var. japonicus).